Consider the following 309-residue polypeptide: Glutaminase (309 aa).

Substrate-binding residues include Ser64, Asn114, Glu160, Asn167, Tyr191, Tyr243, and Val261.

It belongs to the glutaminase family. In terms of assembly, homotetramer.

It catalyses the reaction L-glutamine + H2O = L-glutamate + NH4(+). This chain is Glutaminase, found in Rhodopseudomonas palustris (strain BisB18).